The primary structure comprises 233 residues: Ras-related protein RabV (233 aa).

Residue 15-22 (GEKEVGKS) coordinates GTP. An Effector region motif is present at residues 37 to 45 (YIPTIGIDF). Residues 63–67 (DYVSH) and 122–125 (TKSD) each bind GTP. A disordered region spans residues 143–182 (QNNNNNNNNNNNNNNNNNNNNNNNNNNNNNSNNNNNNNLQ). Low complexity predominate over residues 144 to 180 (NNNNNNNNNNNNNNNNNNNNNNNNNNNNNSNNNNNNN).

It belongs to the small GTPase superfamily. Rab family.

The protein is Ras-related protein RabV (rabV) of Dictyostelium discoideum (Social amoeba).